We begin with the raw amino-acid sequence, 328 residues long: Malate dehydrogenase (328 aa).

Position 11–17 (11–17 (GAAGQIG)) interacts with NAD(+). Arginine 94 and arginine 100 together coordinate substrate. NAD(+)-binding positions include asparagine 107, glutamine 114, and 131 to 133 (VGN). Substrate is bound by residues asparagine 133 and arginine 164. Histidine 189 functions as the Proton acceptor in the catalytic mechanism.

Belongs to the LDH/MDH superfamily. MDH type 2 family.

The catalysed reaction is (S)-malate + NAD(+) = oxaloacetate + NADH + H(+). In terms of biological role, catalyzes the reversible oxidation of malate to oxaloacetate. The polypeptide is Malate dehydrogenase (Acinetobacter baumannii (strain SDF)).